The following is a 327-amino-acid chain: Biotin synthase (327 aa).

One can recognise a Radical SAM core domain in the interval 49 to 282; that stretch reads FNKEKIDLCS…KKVIRLCGGR (234 aa). 3 residues coordinate [4Fe-4S] cluster: cysteine 67, cysteine 71, and cysteine 74. The [2Fe-2S] cluster site is built by serine 110, cysteine 142, cysteine 201, and arginine 277.

It belongs to the radical SAM superfamily. Biotin synthase family. Homodimer. It depends on [4Fe-4S] cluster as a cofactor. The cofactor is [2Fe-2S] cluster.

It catalyses the reaction (4R,5S)-dethiobiotin + (sulfur carrier)-SH + 2 reduced [2Fe-2S]-[ferredoxin] + 2 S-adenosyl-L-methionine = (sulfur carrier)-H + biotin + 2 5'-deoxyadenosine + 2 L-methionine + 2 oxidized [2Fe-2S]-[ferredoxin]. It functions in the pathway cofactor biosynthesis; biotin biosynthesis; biotin from 7,8-diaminononanoate: step 2/2. Its function is as follows. Catalyzes the conversion of dethiobiotin (DTB) to biotin by the insertion of a sulfur atom into dethiobiotin via a radical-based mechanism. This chain is Biotin synthase, found in Methanococcus maripaludis (strain C7 / ATCC BAA-1331).